A 301-amino-acid chain; its full sequence is Protoheme IX farnesyltransferase (301 aa).

Transmembrane regions (helical) follow at residues 20-42 (FTEL…GMWL), 55-75 (VDVI…SGAF), 105-125 (ALMV…MTTW), 126-146 (QAGV…SLYA), 150-172 (LVSN…WFAV), 176-198 (FSMV…FYAI), 227-247 (MFFW…LGIV), 249-269 (VILA…GFKM), and 280-300 (FIYS…ISIF).

Belongs to the UbiA prenyltransferase family. Protoheme IX farnesyltransferase subfamily. Interacts with CtaA.

Its subcellular location is the cell membrane. It carries out the reaction heme b + (2E,6E)-farnesyl diphosphate + H2O = Fe(II)-heme o + diphosphate. The protein operates within porphyrin-containing compound metabolism; heme O biosynthesis; heme O from protoheme: step 1/1. Its function is as follows. Converts heme B (protoheme IX) to heme O by substitution of the vinyl group on carbon 2 of heme B porphyrin ring with a hydroxyethyl farnesyl side group. This chain is Protoheme IX farnesyltransferase, found in Listeria welshimeri serovar 6b (strain ATCC 35897 / DSM 20650 / CCUG 15529 / CIP 8149 / NCTC 11857 / SLCC 5334 / V8).